Here is a 197-residue protein sequence, read N- to C-terminus: MRNILKVTRFDDGTVQEVVHRDGLRVETYYKSEEGEARANLEQRPPAAADEARTYLSPSSSFSSSSSSSSAVALGARPDLAQGGGRGSERRERGCRWNGCPPLAIVLPVLANLIMCAMLAWYLNPLFSPWVYFNCTNSSLGVGNCSNFFGCSRGNLSVNDSFWPPGSVVFGKDGCAVSASVLGLVGPGVLCNGTGCA.

The chain crosses the membrane as a helical span at residues 103 to 123 (LAIVLPVLANLIMCAMLAWYL).

It localises to the host membrane. This is an uncharacterized protein from Equus caballus (Horse).